Reading from the N-terminus, the 255-residue chain is Putative SET domain-containing protein L678 (255 aa).

Positions 5 to 176 constitute an SET domain; the sequence is NRISEVFIKK…TGEELTDNYV (172 aa). The interval 235-255 is disordered; the sequence is LQQNSKNLKKNPKKTIKATPK.

Belongs to the class V-like SAM-binding methyltransferase superfamily.

The chain is Putative SET domain-containing protein L678 from Acanthamoeba polyphaga mimivirus (APMV).